An 876-amino-acid chain; its full sequence is Eukaryotic translation initiation factor 3 subunit C (876 aa).

2 disordered regions span residues 1–25 and 154–233; these read MSRF…VVRA and SXFR…IREQ. Positions 11 to 20 are enriched in acidic residues; sequence SESESSSEDE. 2 stretches are compositionally biased toward basic and acidic residues: residues 154–172 and 182–192; these read SXFR…KDSS and KPIKEKPKPEP. A compositionally biased stretch (low complexity) spans 206–219; that stretch reads SMDWASSSSDSSFS. Residues 632-808 form the PCI domain; that stretch reads FHMHINLELL…ECAILHRSEP (177 aa). A disordered region spans residues 839–876; sequence FFQRGGAQRGEGRQRERPREGWNRRTRNRRRDDERADD. Residues 848–861 show a composition bias toward basic and acidic residues; it reads GEGRQRERPREGWN.

It belongs to the eIF-3 subunit C family. Component of the eukaryotic translation initiation factor 3 (eIF-3) complex.

The protein resides in the cytoplasm. Functionally, component of the eukaryotic translation initiation factor 3 (eIF-3) complex, which is involved in protein synthesis of a specialized repertoire of mRNAs and, together with other initiation factors, stimulates binding of mRNA and methionyl-tRNAi to the 40S ribosome. The eIF-3 complex specifically targets and initiates translation of a subset of mRNAs involved in cell proliferation. This Bombyx mori (Silk moth) protein is Eukaryotic translation initiation factor 3 subunit C.